The chain runs to 957 residues: ERC protein 2 (957 aa).

Residues 1 to 13 (MYGSARTISNLEG) are compositionally biased toward polar residues. A disordered region spans residues 1-44 (MYGSARTISNLEGSPSRSPRLPRSPRLGHRRTSSGGGGGTGKTL). A compositionally biased stretch (low complexity) spans 14-25 (SPSRSPRLPRSP). Residues serine 65 and serine 666 each carry the phosphoserine modification. Residues 140-917 (RQVRDSTMLD…RMKLMADNYD (778 aa)) adopt a coiled-coil conformation. The span at 922-943 (HYHHHHHHHHHRSPGRSQHSNH) shows a compositional bias: basic residues. Positions 922-957 (HYHHHHHHHHHRSPGRSQHSNHRPSPDQDDEEGIWA) are disordered. Residues 948–957 (DQDDEEGIWA) are compositionally biased toward acidic residues.

Interacts with BSN, ERC1, PPFIA1, PPFIA2, PPFIA3 and PPFIA4. Interacts through its C-terminus with the PDZ domain of RIMS1. Part of a complex consisting of ERC2, RIMS1 and UNC13A. Expressed throughout the central nervous system, including hippocampus, cortex, cerebellum and olfactory bulb.

The protein localises to the cytoplasm. Its subcellular location is the synapse. The protein resides in the presynaptic active zone. It localises to the cytoskeleton. Functionally, thought to be involved in the organization of the cytomatrix at the nerve terminals active zone (CAZ) which regulates neurotransmitter release. Seems to act together with BSN. May recruit liprin-alpha proteins to the CAZ. The polypeptide is ERC protein 2 (Erc2) (Mus musculus (Mouse)).